The sequence spans 682 residues: Glucan endo-1,3-beta-glucosidase A1 (682 aa).

Residues 1–38 (MKPSHFTEKRFMKKVLGLFLVVVMLASVGVLPTSKVQA) form the signal peptide. The GH16 domain maps to 391–682 (YTFIGNPNAP…VDYVRVYKEQ (292 aa)). The active-site Nucleophile is glutamate 552. Glutamate 557 functions as the Proton donor in the catalytic mechanism.

The protein belongs to the glycosyl hydrolase 16 family.

The protein localises to the secreted. It catalyses the reaction Hydrolysis of (1-&gt;3)-beta-D-glucosidic linkages in (1-&gt;3)-beta-D-glucans.. In terms of biological role, lysis of cellular walls containing beta-1,3-glucans. Implicated in the defense against fungal pathogens. The polypeptide is Glucan endo-1,3-beta-glucosidase A1 (glcA) (Niallia circulans (Bacillus circulans)).